Consider the following 747-residue polypeptide: DNA repair and recombination protein RAD54-like (747 aa).

The interval 1 to 41 is disordered; sequence MRRSLAPSQLAKRKPEGRSCDDEDWQPGLVTPRKRKSSSET. Residues 2 to 9 form a required for chromatin remodeling, strand pairing activities and coupling of ATPase activity region; that stretch reads RRSLAPSQ. S38 is subject to Phosphoserine. The region spanning 170–345 is the Helicase ATP-binding domain; the sequence is SRRIPGSHGC…FSLVHFVNSG (176 aa). An ATP-binding site is contributed by 183–190; that stretch reads DEMGLGKT. Residues 296–299 carry the DEGH box motif; that stretch reads DEGH. Positions 500–653 constitute a Helicase C-terminal domain; it reads VLDYILAVTR…CVVDEEQDVE (154 aa). The residue at position 515 (K515) is an N6-acetyllysine. S572 is modified (phosphoserine; by NEK1).

The protein belongs to the SNF2/RAD54 helicase family. Homohexamer. Interacts (via N-terminus) with RAD51. Interacts with NAP1L1. Interacts with BRD9; this interaction orchestrates RAD51-RAD54 complex formation. In terms of processing, acetylated. Acetylation promotes interaction with BRD9, and subsequently with RAD54, which is essential for homologous recombination (HR). Post-translationally, phosphorylated. Phosphorylation at Ser-572 by NEK1 specifically in G2 phase allows efficient removal of RAD51 filaments from DNA.

Its subcellular location is the nucleus. It catalyses the reaction ATP + H2O = ADP + phosphate + H(+). Functionally, plays an essential role in homologous recombination (HR) which is a major pathway for repairing DNA double-strand breaks (DSBs), single-stranded DNA (ssDNA) gaps, and stalled or collapsed replication forks. Acts as a molecular motor during the homology search and guides RAD51 ssDNA along a donor dsDNA thereby changing the homology search from the diffusion-based mechanism to a motor-guided mechanism. Also plays an essential role in RAD51-mediated synaptic complex formation which consists of three strands encased in a protein filament formed once homology is recognized. Once DNA strand exchange occured, dissociates RAD51 from nucleoprotein filaments formed on dsDNA. This Homo sapiens (Human) protein is DNA repair and recombination protein RAD54-like (RAD54L).